A 275-amino-acid polypeptide reads, in one-letter code: Large ribosomal subunit protein uL2c (275 aa).

The interval 225-256 is disordered; the sequence is AMNAVDHPHGGGEGRSPIGRSQPSTPWGRPAL.

This sequence belongs to the universal ribosomal protein uL2 family. As to quaternary structure, part of the 50S ribosomal subunit.

The protein localises to the plastid. It is found in the chloroplast. This Cyanidium caldarium (Red alga) protein is Large ribosomal subunit protein uL2c (rpl2).